We begin with the raw amino-acid sequence, 503 residues long: Pre-glycoprotein polyprotein GP complex (503 aa).

G2 carries the N-myristoyl glycine; by host lipid modification. Topologically, residues 2–17 are extracellular; it reads GQIVTLIQSIPEVLQE. A helical transmembrane segment spans residues 18 to 33; the sequence is VFNVALIIVSVLCIVK. Topologically, residues 34–58 are cytoplasmic; the sequence is GFVNLMRCGLFQLVTFLILSGRSCD. C57 lines the Zn(2+) pocket. The Extracellular segment spans residues 59–446; sequence SMMIDRRHNL…QGKTPLALTD (388 aa). 4 disulfides stabilise this stretch: C86/C248, C293/C306, C315/C324, and C378/C399. N-linked (GlcNAc...) asparagine; by host glycosylation is found at N89, N111, N181, and N241. Residues N379, N387, N404, and N409 are each glycosylated (N-linked (GlcNAc...) asparagine; by host). The helical transmembrane segment at 447-467 threads the bilayer; that stretch reads ICFWSLVFYTITVFLHIVGIP. Over 468 to 503 the chain is Cytoplasmic; that stretch reads THRHIIGDGCPKPHRITRNSLCSCGYYKYQRNLTNG. H469, H471, C477, H481, C489, and C491 together coordinate Zn(2+).

The protein belongs to the arenaviridae GPC protein family. Interacts with glycoprotein G2. Part of the GP complex (GP-C) together with glycoprotein G1 and glycoprotein G2. The GP-complex interacts with protein Z, which interacts with ribonucleocapsid; these interactions may induce virion budding. In terms of assembly, homotrimer; disulfide-linked. In pre-fusion state, G1 homotrimers bind G2 homotrimers via ionic interactions. Part of the GP complex (GP-C) together with glycoprotein G2 and the stable signal peptide. The GP-complex interacts with protein Z, which interacts with ribonucleocapsid; these interactions may induce virion budding. As to quaternary structure, homotrimer. Interacts with the stable signal peptide. In pre-fusion state, G2 homotrimers bind G1 homotrimers via ionic interactions. Part of the GP complex (GP-C) together with glycoprotein G1 and the stable signal peptide. Acidification in the endosome triggers rearrangements, which ultimately leads to a 6 helix bundle formed by the two heptad repeat domains (HR1 and HR2) in post-fusion state. The GP-complex interacts with protein Z, which interacts with ribonucleocapsid; these interactions may induce virion budding. In terms of processing, specific enzymatic cleavages in vivo yield mature proteins. GP-C polyprotein is cleaved in the endoplasmic reticulum by the host protease MBTPS1. Only cleaved glycoprotein is incorporated into virions. The SSP remains stably associated with the GP complex following cleavage by signal peptidase and plays crucial roles in the trafficking of GP through the secretory pathway. Post-translationally, myristoylation is necessary for GP2-mediated fusion activity.

The protein resides in the virion membrane. The protein localises to the host endoplasmic reticulum membrane. It is found in the host Golgi apparatus membrane. Its subcellular location is the host cell membrane. Functions as a cleaved signal peptide that is retained as the third component of the GP complex (GP-C). Helps to stabilize the spike complex in its native conformation. The SSP is required for efficient glycoprotein expression, post-translational maturation cleavage of G1 and G2, glycoprotein transport to the cell surface plasma membrane, formation of infectious virus particles, and acid pH-dependent glycoprotein-mediated cell fusion. In terms of biological role, forms the virion spikes together with glycoprotein G2. The glycoprotein spike trimers are connected to the underlying matrix. Interacts with the host receptor leading to virus endocytosis. Functionally, forms the virion spikes together with glycoprotein G1. The glycoprotein spike trimers are connected to the underlying matrix. Class I viral fusion protein that directs fusion of viral and host endosomal membranes, leading to delivery of the nucleocapsid into the cytoplasm. Membrane fusion is mediated by irreversible conformational changes induced by acidification. The sequence is that of Pre-glycoprotein polyprotein GP complex from Cavia cutleri (Guinea pig).